Here is an 872-residue protein sequence, read N- to C-terminus: Alanine--tRNA ligase (872 aa).

Zn(2+)-binding residues include H567, H571, C669, and H673.

It belongs to the class-II aminoacyl-tRNA synthetase family. Zn(2+) serves as cofactor.

Its subcellular location is the cytoplasm. The catalysed reaction is tRNA(Ala) + L-alanine + ATP = L-alanyl-tRNA(Ala) + AMP + diphosphate. Functionally, catalyzes the attachment of alanine to tRNA(Ala) in a two-step reaction: alanine is first activated by ATP to form Ala-AMP and then transferred to the acceptor end of tRNA(Ala). Also edits incorrectly charged Ser-tRNA(Ala) and Gly-tRNA(Ala) via its editing domain. This chain is Alanine--tRNA ligase, found in Streptococcus pyogenes serotype M18 (strain MGAS8232).